We begin with the raw amino-acid sequence, 386 residues long: O-phospho-L-seryl-tRNA:Cys-tRNA synthase (386 aa).

Pyridoxal 5'-phosphate contacts are provided by residues 89–90 (AR), Asn196, and 219–221 (SGH). N6-(pyridoxal phosphate)lysine is present on Lys222.

Belongs to the SepCysS family. As to quaternary structure, homodimer. Interacts with SepRS. It depends on pyridoxal 5'-phosphate as a cofactor.

The enzyme catalyses O-phospho-L-seryl-tRNA(Cys) + hydrogen sulfide + H(+) = L-cysteinyl-tRNA(Cys) + phosphate. Its function is as follows. Converts O-phospho-L-seryl-tRNA(Cys) (Sep-tRNA(Cys)) to L-cysteinyl-tRNA(Cys) (Cys-tRNA(Cys)). This Methanosarcina mazei (strain ATCC BAA-159 / DSM 3647 / Goe1 / Go1 / JCM 11833 / OCM 88) (Methanosarcina frisia) protein is O-phospho-L-seryl-tRNA:Cys-tRNA synthase.